We begin with the raw amino-acid sequence, 637 residues long: 3D-(3,5/4)-trihydroxycyclohexane-1,2-dione hydrolase (637 aa).

Residue glutamate 66 participates in thiamine diphosphate binding. A thiamine pyrophosphate binding region spans residues serine 442–glycine 522. Residues aspartate 493 and asparagine 520 each contribute to the Mg(2+) site.

This sequence belongs to the TPP enzyme family. Mg(2+) is required as a cofactor. It depends on thiamine diphosphate as a cofactor.

The enzyme catalyses 3D-3,5/4-trihydroxycyclohexane-1,2-dione + H2O = 5-deoxy-D-glucuronate + H(+). It participates in polyol metabolism; myo-inositol degradation into acetyl-CoA; acetyl-CoA from myo-inositol: step 3/7. In terms of biological role, involved in the cleavage of the C1-C2 bond of 3D-(3,5/4)-trihydroxycyclohexane-1,2-dione (THcHDO) to yield 5-deoxy-glucuronate (5DG). This is 3D-(3,5/4)-trihydroxycyclohexane-1,2-dione hydrolase from Bacillus velezensis (strain DSM 23117 / BGSC 10A6 / LMG 26770 / FZB42) (Bacillus amyloliquefaciens subsp. plantarum).